The primary structure comprises 802 residues: Cullin-4 (802 aa).

Composition is skewed to low complexity over residues 1-33 (MNFNNNNNNNNNNNNNNNLNNNNNNVNNINNNN) and 656-676 (STSSNTSSNTSSNTSSSASGS). Disordered stretches follow at residues 1–43 (MNFN…SLAG) and 656–686 (STSSNTSSNTSSNTSSSASGSASGGASGGAT). Residues 734 to 794 (DRQYQVDAAI…KEYLCRDPEN (61 aa)) enclose the Cullin neddylation domain. A Glycyl lysine isopeptide (Lys-Gly) (interchain with G-Cter in NEDD8) cross-link involves residue lysine 748.

Belongs to the cullin family. Neddylated. Deneddylated via its interaction with the COP9 signalosome (CSN) complex.

It functions in the pathway protein modification; protein ubiquitination. Probable core component of cullin-based SCF-like E3 ubiquitin-protein ligase complexes which mediate the ubiquitination and subsequent proteasomal degradation of target proteins. The E3 ubiquitin-protein ligase activity of the complex is dependent on the neddylation of the cullin subunit. The polypeptide is Cullin-4 (culD) (Dictyostelium discoideum (Social amoeba)).